Consider the following 243-residue polypeptide: MAMGEALRAAAADAVVTFLWVLCVSTLGASTTAVTSYLRLQGVHFALLVTVSLLSVLLFVFNILCDALGGASFNPTGVAAFYAAGVTSPSLFSIALRLPAQAAGAVGGALAISELMPAQYRHMLGGPSLKVDPHTGAGAELVLTFVITLAVLLIIVKGPRNPIIKTWMISICTLCLVLSGAAYTGPSMNPANAFGWAYVNNRHNTWEQFYVYWICPFIGAILAAWIFRAMFLTPPPKPKAKKA.

2 consecutive transmembrane segments (helical) span residues 9 to 29 (AAAADAVVTFLWVLCVSTLGA) and 45 to 65 (FALLVTVSLLSVLLFVFNILC). The short motif at 74 to 76 (NPT) is the NPA 1 element. 3 consecutive transmembrane segments (helical) span residues 98 to 118 (LPAQAAGAVGGALAISELMPA), 136 to 156 (GAGAELVLTFVITLAVLLIIV), and 163 to 183 (IIKTWMISICTLCLVLSGAAY). An NPA 2 motif is present at residues 189–191 (NPA). The helical transmembrane segment at 211–231 (VYWICPFIGAILAAWIFRAMF) threads the bilayer.

This sequence belongs to the MIP/aquaporin (TC 1.A.8) family. SIP (TC 1.A.8.10) subfamily.

It is found in the membrane. Functionally, aquaporins facilitate the transport of water and small neutral solutes across cell membranes. The protein is Aquaporin SIP1-2 (SIP1-2) of Zea mays (Maize).